The chain runs to 122 residues: Small ribosomal subunit protein uS13 (122 aa).

Residues 96–122 form a disordered region; that stretch reads LPCRGQRTHTNARTRKGPRKPIAGKKK.

The protein belongs to the universal ribosomal protein uS13 family. As to quaternary structure, part of the 30S ribosomal subunit. Forms a loose heterodimer with protein S19. Forms two bridges to the 50S subunit in the 70S ribosome.

Its function is as follows. Located at the top of the head of the 30S subunit, it contacts several helices of the 16S rRNA. In the 70S ribosome it contacts the 23S rRNA (bridge B1a) and protein L5 of the 50S subunit (bridge B1b), connecting the 2 subunits; these bridges are implicated in subunit movement. Contacts the tRNAs in the A and P-sites. This chain is Small ribosomal subunit protein uS13, found in Magnetococcus marinus (strain ATCC BAA-1437 / JCM 17883 / MC-1).